The sequence spans 279 residues: Prepilin leader peptidase/N-methyltransferase (279 aa).

The Periplasmic segment spans residues 1-16 (MDDLREFAQLFPAWWF). A helical transmembrane segment spans residues 17-35 (GALGVLGLIVGSFLNVVIY). The Cytoplasmic portion of the chain corresponds to 36-104 (RLPIMLERRW…RSRCCHQSVS (69 aa)). The chain crosses the membrane as a helical span at residues 105–123 (VQYPLVEVITMLAFLAAGL). Over 124 to 130 (LWLPGMA) the chain is Periplasmic. Residues 131–149 (LWGALILLSFLLVLTVIDI) traverse the membrane as a helical segment. Residues 150–163 (KTLLLPDELTLSLL) are Cytoplasmic-facing. The helical transmembrane segment at 164-182 (WMGLLFNLSGTFVSLNDAV) threads the bilayer. Residues 183 to 185 (VGA) are Periplasmic-facing. A helical transmembrane segment spans residues 186-204 (MAGYLSLWLLYWAFKYATG). At 205–214 (KEALGYGDFK) the chain is on the cytoplasmic side. A helical transmembrane segment spans residues 215-233 (LLAALGAWLGWQALPNLVL). The Periplasmic portion of the chain corresponds to 234-236 (VAA). Residues 237-254 (LSGLVVTLIWRGLRKEDT) form a helical membrane-spanning segment. Over 255 to 257 (AKP) the chain is Cytoplasmic. A helical transmembrane segment spans residues 258 to 276 (LAFGPWLAIGGVFGMIMNG). Residues 277-279 (FNL) are Periplasmic-facing.

Belongs to the peptidase A24 family.

It is found in the cell inner membrane. The enzyme catalyses Typically cleaves a -Gly-|-Phe- bond to release an N-terminal, basic peptide of 5-8 residues from type IV prepilin, and then N-methylates the new N-terminal amino group, the methyl donor being S-adenosyl-L-methionine.. Functionally, plays a role in type II pseudopili formation by proteolytically removing the leader sequence from substrate proteins and subsequently monomethylating the alpha-amino group of the newly exposed N-terminal phenylalanine. Substrates include proteins required for biogenesis of the type II general secretory apparatus. The sequence is that of Prepilin leader peptidase/N-methyltransferase (outO) from Pectobacterium carotovorum subsp. carotovorum (Erwinia carotovora subsp. carotovora).